Consider the following 317-residue polypeptide: Egg-laying defective protein 26 (317 aa).

The LRAT domain occupies 156 to 277 (EVNVSGVKFY…CSTGVPFSYD (122 aa)). Residues histidine 166 and histidine 178 contribute to the active site. Residue cysteine 261 is the Acyl-thioester intermediate of the active site.

As to expression, highly expressed in the cells of the spermatheca, the mouth, and the lining of the pharynx, the rectum, and the excretory canal. Also expressed in the pharyngeal intestinal junction cell.

The protein resides in the apical cell membrane. Functionally, putative acyltransferase. Plays a role in the morphogenesis of a vulval toroid cell, vulF, which is located where the vulva and the uterus connect. Not required for specifying vulval cell fate. In Caenorhabditis elegans, this protein is Egg-laying defective protein 26.